Reading from the N-terminus, the 559-residue chain is Hepatocyte nuclear factor 1-beta-A (559 aa).

Residues 1–35 form a dimerization region; sequence MFANMVSKLTSLQQELLSALLDSGVTKDVLLQALE. Residues 5–36 enclose the HNF-p1 domain; sequence MVSKLTSLQQELLSALLDSGVTKDVLLQALED. Residues 53–98 form a disordered region; the sequence is MSPSGSKLSDTDSKPVFHTLTNGHSKGKLSGDEGSEDGDDYDTPPI. Residues 85–94 show a composition bias toward acidic residues; it reads EGSEDGDDYD. Residues 100–195 form the POU-specific atypical domain; the sequence is KELQSQNTEE…ILRQFNQATQ (96 aa). Positions 240 to 320 form a DNA-binding region, homeobox; HNF1-type; sequence LRRNRFKWGP…NRRKEEAFRQ (81 aa). Composition is skewed to low complexity over residues 334 to 354 and 370 to 381; these read LNSLLSHSSPHHPQTSSSPPS and TSSTTINHHSSN. Positions 334–384 are disordered; it reads LNSLLSHSSPHHPQTSSSPPSKMQGVRYSQQGPGEVTSSTTINHHSSNAMS.

It belongs to the HNF1 homeobox family. Binds DNA as a dimer. Can form homodimer or heterodimer with HNF1-alpha. As to expression, during embryonic development, expressed dynamically in the developing hindbrain, kidney (pronephros), gut, liver and pancreas; expressed in both intermediate mesoderm (precursor to the kidney) and the caudal hindbrain (including rhombomeres r5 and r6) at 10 hpf with expression diminishing caudally by 14 hpf. Strongly expressed in adult kidney, gut, liver and swim bladder; weakly expressed in brain, eye, testis, ovary and heart.

The protein resides in the nucleus. In terms of biological role, transcription factor that binds to the inverted palindrome 5'-GTTAATNATTAAC-3'. Required for induction of rhombomere r5/r6 gene expression in the hindbrain. This Danio rerio (Zebrafish) protein is Hepatocyte nuclear factor 1-beta-A (hnf1ba).